We begin with the raw amino-acid sequence, 316 residues long: Acetaldehyde dehydrogenase (316 aa).

11 to 14 (SGNI) contacts NAD(+). Residue cysteine 131 is the Acyl-thioester intermediate of the active site. NAD(+) is bound by residues 162 to 170 (SAGPGTRAN) and asparagine 289.

Belongs to the acetaldehyde dehydrogenase family. Interacts with MhpE.

It carries out the reaction acetaldehyde + NAD(+) + CoA = acetyl-CoA + NADH + H(+). The protein operates within aromatic compound metabolism; 3-phenylpropanoate degradation. Its function is as follows. Catalyzes the conversion of acetaldehyde to acetyl-CoA, using NAD(+) and coenzyme A. Is the final enzyme in the meta-cleavage pathway for the degradation of aromatic compounds. The chain is Acetaldehyde dehydrogenase from Escherichia coli O81 (strain ED1a).